A 445-amino-acid chain; its full sequence is Probable protein phosphatase 2C 14 (445 aa).

Positions 120-440 (GFGVVSRNGK…DDITVVIIDL (321 aa)) constitute a PPM-type phosphatase domain. Residues aspartate 156, glycine 157, and aspartate 318 each contribute to the Mn(2+) site. The segment at 384 to 404 (NSENESPSLNREIGSSPSKSP) is disordered. The span at 390–404 (PSLNREIGSSPSKSP) shows a compositional bias: polar residues. Aspartate 431 is a Mn(2+) binding site.

Belongs to the PP2C family. Mg(2+) is required as a cofactor. Mn(2+) serves as cofactor.

It catalyses the reaction O-phospho-L-seryl-[protein] + H2O = L-seryl-[protein] + phosphate. The enzyme catalyses O-phospho-L-threonyl-[protein] + H2O = L-threonyl-[protein] + phosphate. The polypeptide is Probable protein phosphatase 2C 14 (Arabidopsis thaliana (Mouse-ear cress)).